Consider the following 520-residue polypeptide: Calcium and calcium/calmodulin-dependent serine/threonine-protein kinase (520 aa).

Positions Tyr-13–Val-302 constitute a Protein kinase domain. Residues Leu-19–Val-27 and Lys-44 each bind ATP. Catalysis depends on Asp-167, which acts as the Proton acceptor. A helical membrane pass occupies residues Met-227 to Pro-243. Thr-267 is subject to Phosphothreonine; by autocatalysis. Positions Ala-325–Leu-338 are calmodulin-binding. Residues Thr-346–Ala-368 are a coiled coil. EF-hand domains are found at residues Glu-361–Asn-395, Ser-396–Ser-431, Gln-432–Asp-467, and Thr-474–Leu-509. Residues Asp-409, Asn-411, Asp-413, Thr-415, Glu-420, Asp-445, Asp-447, Ser-449, Cys-451, Glu-456, Asp-487, Asn-489, Asp-491, and Glu-498 each contribute to the Ca(2+) site.

This sequence belongs to the protein kinase superfamily. CAMK Ser/Thr protein kinase family. CaMK subfamily. Autophosphorylation stimulated by calcium and inhibited by calcium/calmodulin. Occurs probably by an intermolecular mechanism.

The protein resides in the membrane. It catalyses the reaction L-seryl-[protein] + ATP = O-phospho-L-seryl-[protein] + ADP + H(+). It carries out the reaction L-threonyl-[protein] + ATP = O-phospho-L-threonyl-[protein] + ADP + H(+). Activated by calcium/calmodulin binding after calcium-induced autophosphorylation. Autophosphorylation is associated with a time-dependent loss of kinase activity sensitive to reaction pH and ATP concentration. In vitro inactivation leads to the formation of network-like structures. In terms of biological role, protein kinase that may be involved in microsporogenesis. The polypeptide is Calcium and calcium/calmodulin-dependent serine/threonine-protein kinase (CCAMK) (Lilium longiflorum (Trumpet lily)).